The following is a 122-amino-acid chain: uncharacterized protein (122 aa).

This is an uncharacterized protein from Escherichia coli (strain K12).